Reading from the N-terminus, the 3132-residue chain is Toxin CdiA (3132 aa).

A signal peptide (signal) is located at residues 1–32 (MHQPPVRFTYRLLSYLVSAIIAGQPLLPAVGA). A two-partner system transport domain (TPS) region spans residues 36-322 (PQNGAGMDKA…AGGNLSVTGT (287 aa)). The FHA-1 stretch occupies residues 351–1378 (GELTAGQNAM…ITMNTAHLLN (1028 aa)). The tract at residues 1379-1635 (SWDAISASHE…LSLSGASVSS (257 aa)) is receptor-binding domain (RBD). Residues 1636–1820 (YPLPSGNNGY…LSPEDITLHN (185 aa)) are YP domain. The periplasmic FHA-1 repeat (pFR) stretch occupies residues 1821-1859 (GSVISGNNVQLAGGNITNSGSSINAQNDLLLDRTGSIDN). Positions 1930 to 2526 (RATDSLFMGA…QDSDRYDSRQ (597 aa)) are FHA-2. Disordered stretches follow at residues 2195–2228 (TGTG…STIG) and 2456–2497 (AGIN…SGAQ). 2 stretches are compositionally biased toward polar residues: residues 2217–2228 (GTTQSQSASTIG) and 2483–2497 (VSLT…SGAQ). The pre-toxin (PT) domain stretch occupies residues 2862–2904 (DNLSEQERQQISMLATIASGIAGGLVGNSTSAAGTGAQAGRNS). A VENN CT cleavage motif motif is present at residues 2905 to 2908 (VENN). A C-terminal effector domain (CT) region spans residues 2909-3121 (AMSGLEGFGT…IGTVTDYQIE (213 aa)).

It in the N-terminal section; belongs to the CdiA toxin family. In terms of assembly, probably interacts with cognate immunity protein CdiI. In terms of processing, expressed as 303 kDa protein which can be processed to 284 kDa and 195 kDa forms.

Its subcellular location is the secreted. It is found in the target cell. The protein resides in the target cell cytoplasm. Toxic component of a toxin-immunity protein module, which functions as a cellular contact-dependent growth inhibition (CDI) system. CDI modules allow bacteria to communicate with and inhibit the growth of closely related neighboring bacteria (target cell counts decrease 1000- to 10(5)-fold) in a contact-dependent fashion. Inhibitory cells must be in logarithmic (not stationary) phase to inhibit growth of their targets, but protein synthesis is not necessary. The presence of P or S but not type 1 pili protects the target cells against growth inhibition for this CDI. BamA on the outer membrane of target cells acts as a receptor for CdiA, while target cell multidrug efflux pump AcrB facilitates its transport into the cytoplasm. Outer membrane receptor function is dependent on extracellular loops of BamA. Cells undergoing CDI show a 2- to 5-fold reversible decrease in aerobic respiration, proton motive force and steady-state ATP levels, suggesting this CT module is an ionophore that disrupts the target cell's inner cell membrane. Growth recovery requires an energy source. Cells expressing this protein in the absence of CdiI initially form filaments, some of which contain multiple nucleoids, while others are devoid of nucleoids. CDI cells induce the phage shock response, but pspA is not required for recovery from CDI. CDI is neutralized by its cognate immunity protein CdiI, but not by non-cognate CdiI from other bacteria with different CDI systems. Plays a role in biofilm formation, a region N-terminal to residue 644 is implicated in this receptor-independent cell adhesion. In terms of biological role, the CdiA protein is thought to be exported from the cell through the central lumen of CdiB, the other half of its two-partner system (TPS). The TPS domain probably remains associated with CdiB while the FHA-1 domain forms an extended filament (33 nm long) with the receptor-binding domain (RBD) at its extremity; in the secretion arrested state the C-terminus of the RBD and YP domains form a hairpin-like structure as the FHA-2, PT and CT domains are periplasmic. The YP domain is probably responsible for this arrest at the point where it re-enters the host cell periplasm. Upon binding to a target cell outer membrane receptor (BamA for this CDI) a signal is transmitted to activate secretion. The filament becomes about 5 nm longer, the rest of CdiA is secreted and the FHA-2 domain becomes stably associated with the target cell's outer membrane where it facilitates entry of the toxic CT domain into the target cell periplasm. From there the toxic CT domain is cleaved and gains access to the target cell cytoplasm via an inner membrane protein (multidrug efflux pump AcrB for this CDI). The chain is Toxin CdiA from Escherichia coli.